We begin with the raw amino-acid sequence, 585 residues long: Protein FAM83D (585 aa).

The DUF1669 stretch occupies residues 1–296 (MAARFELLDD…LYAQSEPISS (296 aa)). S295 is subject to Phosphoserine. Disordered stretches follow at residues 334 to 411 (LSST…TSSS) and 425 to 482 (AASS…SQGS). A required for interaction with KIF22 and function in chromosome congression region spans residues 337-585 (TPRKSNLGPE…RDIALYPPYQ (249 aa)). Basic and acidic residues-rich tracts occupy residues 347–360 (EPPK…RPDS) and 369–383 (DYFH…DSKV). Residues 425 to 441 (AASSQATVWSKSTTTQT) are compositionally biased toward polar residues. S458 bears the Phosphoserine mark. Residues 458–482 (SPASKMSVSRSSSVRSSSSVSSQGS) are compositionally biased toward low complexity. T511 is subject to Phosphothreonine.

This sequence belongs to the FAM83 family. In terms of assembly, interacts with FBXW7; promotes FBXW7 degradation. May interact with RAF1. Interacts with KIF22; recruits KIF22 to mitotic spindle microtubules. Interacts (via C-terminus) with DYNLL1. Interacts with HMMR. Directly interacts (via DUF1669) with CSNK1A1 and CSNK1A1L. Phosphorylated during mitosis.

It localises to the cytoplasm. Its subcellular location is the cytoskeleton. It is found in the spindle. The protein localises to the spindle pole. Functionally, through the degradation of FBXW7, may act indirectly on the expression and downstream signaling of MTOR, JUN and MYC. May play also a role in cell proliferation through activation of the ERK1/ERK2 signaling cascade. May also be important for proper chromosome congression and alignment during mitosis through its interaction with KIF22. This Mus musculus (Mouse) protein is Protein FAM83D.